Here is a 524-residue protein sequence, read N- to C-terminus: Ribonuclease Y (524 aa).

A helical transmembrane segment spans residues 3–23 (IVINLLLLVLAALVAFVAGFF). Residues 214 to 280 (ALSVVHIQSD…KLTLKKLLAD (67 aa)) form the KH domain. Residues 340 to 432 (LLQHSREVAM…VDAANTISLS (93 aa)) enclose the HD domain.

The protein belongs to the RNase Y family.

It localises to the cell membrane. Functionally, endoribonuclease that initiates mRNA decay. This Chlorobium chlorochromatii (strain CaD3) protein is Ribonuclease Y.